The following is a 185-amino-acid chain: Ribosome-recycling factor (185 aa).

The protein belongs to the RRF family.

The protein localises to the cytoplasm. Responsible for the release of ribosomes from messenger RNA at the termination of protein biosynthesis. May increase the efficiency of translation by recycling ribosomes from one round of translation to another. The protein is Ribosome-recycling factor of Thermobifida fusca (strain YX).